The chain runs to 197 residues: Auxin-responsive protein IAA19 (197 aa).

The EAR-like (transcriptional repression) motif lies at 13-17 (LRLGL). Over residues 35–47 (MNMTSSGSNSDQC) the composition is skewed to polar residues. The segment at 35 to 67 (MNMTSSGSNSDQCESGVVSSGGDAEKVNDSPAA) is disordered. The PB1 domain maps to 96–184 (LGYVKVSMDG…KRLRIMKRSD (89 aa)).

It belongs to the Aux/IAA family. Homodimers and heterodimers. Interacts with the auxin response factor ARF7.

It localises to the nucleus. Functionally, aux/IAA proteins are short-lived transcriptional factors that function as repressors of early auxin response genes at low auxin concentrations. Repression is thought to result from the interaction with auxin response factors (ARFs), proteins that bind to the auxin-responsive promoter element (AuxRE). Formation of heterodimers with ARF proteins may alter their ability to modulate early auxin response genes expression. The sequence is that of Auxin-responsive protein IAA19 (IAA19) from Arabidopsis thaliana (Mouse-ear cress).